The primary structure comprises 418 residues: Nucleoside permease NupG (418 aa).

The Cytoplasmic portion of the chain corresponds to 1–4 (MNLK). A helical membrane pass occupies residues 5-29 (LQLKILSFLQFCLWGSWLTTLGSYM). Residues 30–36 (FVTLKFD) lie on the Periplasmic side of the membrane. A helical transmembrane segment spans residues 37–58 (GASIGAVYSSLGIAAVFMPALL). The Cytoplasmic segment spans residues 59–67 (GIVADKWLS). Residues 68-88 (AKWVYAICHTIGAITLFMAAQ) form a helical membrane-spanning segment. Topologically, residues 89 to 91 (VTT) are periplasmic. The helical transmembrane segment at 92–113 (PEAMFLVILINSFAYMPTLGLI) threads the bilayer. Residues 114 to 135 (NTISYYRLQNAGMDIVTDFPPI) lie on the Cytoplasmic side of the membrane. Residues 136 to 156 (RIWGTIGFIMAMWVVSLSGFE) traverse the membrane as a helical segment. The Periplasmic portion of the chain corresponds to 157 to 158 (LS). A helical transmembrane segment spans residues 159–178 (HMQLYIGAALSAILVLFTLT). Over 179 to 209 (LPHIPVAKQQANQSWTTLLGLDAFALFKNKR) the chain is Cytoplasmic. The helical transmembrane segment at 210–236 (MAIFFIFSMLLGAELQITNMFGNTFLH) threads the bilayer. Residues 237–247 (SFDKDPMFASS) are Periplasmic-facing. Residues 248-268 (FIVQHASIIMSISQISETLFI) traverse the membrane as a helical segment. Residues 269–280 (LTIPFFLSRYGI) lie on the Cytoplasmic side of the membrane. Residues 281-300 (KNVMMISIVAWILRFALFAY) traverse the membrane as a helical segment. Residues 301 to 305 (GDPTP) are Periplasmic-facing. Residues 306 to 326 (FGTVLLVLSMIVYGCAFDFFN) form a helical membrane-spanning segment. At 327–346 (ISGSVFVEKEVSPAIRASAQ) the chain is on the cytoplasmic side. The chain crosses the membrane as a helical span at residues 347–369 (GMFLMMTNGFGCILGGIVSGKVV). Topologically, residues 370–379 (EMYTQNGITD) are periplasmic. Residues 380–403 (WQTVWLIFAGYSVVLAFAFMAMFK) form a helical membrane-spanning segment. Over 404–418 (YKHVRVPTGTQTVSH) the chain is Cytoplasmic.

Belongs to the major facilitator superfamily. Nucleoside:H(+) symporter (NHS) (TC 2.A.1.10) family.

The protein resides in the cell inner membrane. It carries out the reaction adenosine(in) + H(+)(in) = adenosine(out) + H(+)(out). It catalyses the reaction uridine(in) + H(+)(in) = uridine(out) + H(+)(out). The enzyme catalyses thymidine(in) + H(+)(in) = thymidine(out) + H(+)(out). The catalysed reaction is cytidine(in) + H(+)(in) = cytidine(out) + H(+)(out). It carries out the reaction 2'-deoxycytidine(in) + H(+)(in) = 2'-deoxycytidine(out) + H(+)(out). It catalyses the reaction guanosine(in) + H(+)(in) = guanosine(out) + H(+)(out). The enzyme catalyses inosine(in) + H(+)(in) = inosine(out) + H(+)(out). Its activity is regulated as follows. Inhibited by the protonophore uncouplers 2,4-dinitrophenol and carbonyl cyanide m-chlorophenylhydrazone (CCCP), and by valinomycin. Inhibited by the nucleoside antibiotic showdomycin. Its function is as follows. Broad-specificity transporter of purine and pyrimidine nucleosides. Can transport adenosine, uridine, thymidine, cytidine, deoxycytidine, guanosine and inosine. Can also transport xanthosine, but with a very low affinity. Transport is driven by a proton motive force. This Escherichia coli (strain K12) protein is Nucleoside permease NupG.